A 447-amino-acid chain; its full sequence is Biotin carboxylase (447 aa).

The Biotin carboxylation domain maps to 1–447 (MKFDKILIAN…STSFVQEMNK (447 aa)). ATP-binding positions include K117, K159, 165–166 (GG), 201–204 (EKFI), and H209. Positions 121–318 (KETMQKAGVP…LLVEQIRIAQ (198 aa)) constitute an ATP-grasp domain. K238 provides a ligand contact to hydrogencarbonate. The ATP site is built by E276 and E289. Mg(2+) is bound by residues E276, E289, and N291. Mn(2+)-binding residues include E276, E289, and N291. Hydrogencarbonate is bound by residues R293, V296, and R339. R293 is a catalytic residue. R339 contributes to the biotin binding site.

In terms of assembly, acetyl-CoA carboxylase is a heterohexamer of biotin carboxyl carrier protein, biotin carboxylase and the two subunits of carboxyl transferase in a 2:2 complex. Mg(2+) serves as cofactor. Requires Mn(2+) as cofactor.

It carries out the reaction N(6)-biotinyl-L-lysyl-[protein] + hydrogencarbonate + ATP = N(6)-carboxybiotinyl-L-lysyl-[protein] + ADP + phosphate + H(+). Its pathway is lipid metabolism; malonyl-CoA biosynthesis; malonyl-CoA from acetyl-CoA: step 1/1. This protein is a component of the acetyl coenzyme A carboxylase complex; first, biotin carboxylase catalyzes the carboxylation of the carrier protein and then the transcarboxylase transfers the carboxyl group to form malonyl-CoA. In Nostoc sp. (strain PCC 7120 / SAG 25.82 / UTEX 2576), this protein is Biotin carboxylase (accC).